The primary structure comprises 433 residues: Protein FAM98B (433 aa).

Positions 303 to 433 are disordered; the sequence is GRVPDRGGRP…GGGGGGYRRY (131 aa). Residues 305 to 314 are compositionally biased toward basic and acidic residues; it reads VPDRGGRPNE. The span at 331–433 shows a compositional bias: gly residues; the sequence is GGGGRGGWGG…GGGGGGYRRY (103 aa).

Belongs to the FAM98 family. In terms of assembly, homodimer. Component of the tRNA-splicing ligase complex. Interacts with FAM98A. Expressed strongly in colorectal cancer tissues compared to wild-type colon samples (at protein level). Expressed strongly in colorectal cancer tissues compared to wild-type colon samples.

The protein resides in the nucleus. Its subcellular location is the cytoplasm. Functionally, positively stimulates PRMT1-induced protein arginine dimethylated arginine methylation. The polypeptide is Protein FAM98B (FAM98B) (Homo sapiens (Human)).